The sequence spans 481 residues: Glutamate--tRNA ligase (481 aa).

Positions 11 to 21 (PSPTGLLHIGN) match the 'HIGH' region motif. The 'KMSKS' region motif lies at 255–259 (KLSKR). Lys-258 serves as a coordination point for ATP.

It belongs to the class-I aminoacyl-tRNA synthetase family. Glutamate--tRNA ligase type 1 subfamily. As to quaternary structure, monomer.

It is found in the cytoplasm. It carries out the reaction tRNA(Glu) + L-glutamate + ATP = L-glutamyl-tRNA(Glu) + AMP + diphosphate. Its function is as follows. Catalyzes the attachment of glutamate to tRNA(Glu) in a two-step reaction: glutamate is first activated by ATP to form Glu-AMP and then transferred to the acceptor end of tRNA(Glu). This is Glutamate--tRNA ligase from Streptococcus pyogenes serotype M6 (strain ATCC BAA-946 / MGAS10394).